The primary structure comprises 254 residues: ATP synthase subunit a (254 aa).

The propeptide at 1 to 6 is removed in mature form; sequence MAFLIH. 7 helical membrane passes run 32 to 52, 83 to 103, 119 to 139, 146 to 166, 182 to 202, 207 to 227, and 228 to 248; these read LTNL…LHIM, IGAA…FILI, SIMV…ILGL, FFSF…LVPI, LFAN…FLAP, TFII…IIGL, and EIAV…SYLK.

It belongs to the ATPase A chain family. In terms of assembly, F-type ATPases have 2 components, CF(1) - the catalytic core - and CF(0) - the membrane proton channel. CF(1) has five subunits: alpha(3), beta(3), gamma(1), delta(1), epsilon(1). CF(0) has three main subunits: a, b and c.

The protein localises to the mitochondrion inner membrane. Its function is as follows. Mitochondrial membrane ATP synthase (F(1)F(0) ATP synthase or Complex V) produces ATP from ADP in the presence of a proton gradient across the membrane which is generated by electron transport complexes of the respiratory chain. F-type ATPases consist of two structural domains, F(1) - containing the extramembraneous catalytic core and F(0) - containing the membrane proton channel, linked together by a central stalk and a peripheral stalk. During catalysis, ATP synthesis in the catalytic domain of F(1) is coupled via a rotary mechanism of the central stalk subunits to proton translocation. Key component of the proton channel; it may play a direct role in the translocation of protons across the membrane. The sequence is that of ATP synthase subunit a (ATP6) from Mycosarcoma maydis (Corn smut fungus).